The following is a 346-amino-acid chain: Protein RecA (346 aa).

68-75 (GPESSGKT) is an ATP binding site.

Belongs to the RecA family.

It localises to the cytoplasm. Functionally, can catalyze the hydrolysis of ATP in the presence of single-stranded DNA, the ATP-dependent uptake of single-stranded DNA by duplex DNA, and the ATP-dependent hybridization of homologous single-stranded DNAs. It interacts with LexA causing its activation and leading to its autocatalytic cleavage. In Heliobacterium modesticaldum (strain ATCC 51547 / Ice1), this protein is Protein RecA.